The sequence spans 185 residues: Protein FAM219A (185 aa).

N-acetylmethionine is present on Met-1. Positions 1 to 131 (MMEEIDRFQV…SRYSSSGYSS (131 aa)) are disordered. The residue at position 47 (Ser-47) is a Phosphoserine. Residues 52–61 (KLEKQRELAR) show a composition bias toward basic and acidic residues. A compositionally biased stretch (polar residues) spans 66–80 (KNGSMGSPVNQQPKK). Ser-72 and Ser-102 each carry phosphoserine. Thr-113 carries the post-translational modification Phosphothreonine. 2 positions are modified to phosphoserine: Ser-115 and Ser-122. Positions 122–131 (SRYSSSGYSS) are enriched in low complexity.

It belongs to the FAM219 family.

In Homo sapiens (Human), this protein is Protein FAM219A (FAM219A).